The sequence spans 589 residues: ATP-dependent lipid A-core flippase (589 aa).

The next 6 membrane-spanning stretches (helical) occupy residues 33 to 53, 70 to 90, 148 to 168, 170 to 190, 262 to 282, and 283 to 303; these read VLAI…AWII, LWVP…TFAS, VVVL…MTYL, GWLV…VTAA, LGAV…VILE, and TISP…LPPL. The ABC transmembrane type-1 domain maps to 33–315; the sequence is VLAIVCMVLA…VIGVNAEIQK (283 aa). The region spanning 347–583 is the ABC transporter domain; sequence IEFDRVAFRY…NGHYASLHRV (237 aa). ATP is bound at residue 381–388; the sequence is GRSGSGKT.

It belongs to the ABC transporter superfamily. Lipid exporter (TC 3.A.1.106) family. In terms of assembly, homodimer.

It localises to the cell inner membrane. The catalysed reaction is ATP + H2O + lipid A-core oligosaccharideSide 1 = ADP + phosphate + lipid A-core oligosaccharideSide 2.. In terms of biological role, involved in lipopolysaccharide (LPS) biosynthesis. Translocates lipid A-core from the inner to the outer leaflet of the inner membrane. Transmembrane domains (TMD) form a pore in the inner membrane and the ATP-binding domain (NBD) is responsible for energy generation. In Alkalilimnicola ehrlichii (strain ATCC BAA-1101 / DSM 17681 / MLHE-1), this protein is ATP-dependent lipid A-core flippase.